The primary structure comprises 341 residues: MLSPEALTTAVDAAQQAIALADTLDVLARVKTEHLGDRSPLALARQALAVLPKEQRAEAGKRVNAARNAAQRSYDERLATLRAERDAAVLVAEGIDVTLPSTRVPAGARHPIIMLAEHVADTFIAMGWELAEGPEVETEQFNFDALNFPADHPARGEQDTFYIAPEDSRQLLRTHTSPVQIRTLLARELPVYIISIGRTFRTDELDATHTPIFHQVEGLAVDRGLSMAHLRGTLDAFARAEFGPSARTRIRPHFFPFTEPSAEVDVWFANKIGGAAWVEWGGCGMVHPNVLRATGIDPDLYSGFAFGMGLERTLQFRNGIPDMRDMVEGDVRFSLPFGVGA.

Glu-259 contributes to the Mg(2+) binding site.

The protein belongs to the class-II aminoacyl-tRNA synthetase family. Phe-tRNA synthetase alpha subunit type 1 subfamily. Tetramer of two alpha and two beta subunits. Mg(2+) is required as a cofactor.

Its subcellular location is the cytoplasm. It carries out the reaction tRNA(Phe) + L-phenylalanine + ATP = L-phenylalanyl-tRNA(Phe) + AMP + diphosphate + H(+). This is Phenylalanine--tRNA ligase alpha subunit from Mycobacterium tuberculosis (strain ATCC 25177 / H37Ra).